Reading from the N-terminus, the 125-residue chain is Putative iron-sulfur cluster insertion protein ErpA 2 (125 aa).

Cysteine 53, cysteine 117, and cysteine 119 together coordinate iron-sulfur cluster.

This sequence belongs to the HesB/IscA family. In terms of assembly, homodimer. Requires iron-sulfur cluster as cofactor.

Required for insertion of 4Fe-4S clusters. The sequence is that of Putative iron-sulfur cluster insertion protein ErpA 2 from Polaromonas naphthalenivorans (strain CJ2).